Here is a 1755-residue protein sequence, read N- to C-terminus: MESQQLSNYPQISHGSACASVTSKEVHTNQDPLDVSASKTEECEKASTKANSQQTTTPASSAVPENPHHASPQPASVPPPQNGPYPQQCMMTQNQANPSGWSFYGHPSMIPYTPYQMSPMYFPPGPQSQFPQYPSSVGTPLSTPSPESGNTFTDSSSADSDMTSTKKYVRPPPMLTSPNDFPNWVKTYIKFLQNSNLGGIIPTVNGKPVRQITDDELTFLYNTFQIFAPSQFLPTWVKDILSVDYTDIMKILSKSIEKMQSDTQEANDIVTLANLQYNGSTPADAFETKVTNIINRLNNNGIHINNKVACQLIMRGLSGEYKFLRYTRHRHLNMTVAELFLDIHAIYEEQQGSRNSKPNYRRNLSDEKNDSRSYTNTTKPKVIARNPQKTNNSKSKTARAHNVSTSNNSPSTDNDSISKSTTEPIQLNNKHDLHLGQELTESTVNHTNHSDDELPGHLLLDSGASRTLIRSAHHIHSASSNPDINVVDAQKRNIPINAIGDLQFHFQDNTKTSIKVLHTPNIAYDLLSLNELAAVDITACFTKNVLERSDGTVLAPIVKYGDFYWVSKKYLLPSNISVPTINNVHTSESTRKYPYPFIHRMLAHANAQTIRYSLKNNTITYFNESDVDWSSAIDYQCPDCLIGKSTKHRHIKGSRLKYQNSYEPFQYLHTDIFGPVHNLPKSAPSYFISFTDETTKFRWVYPLHDRREDSILDVFTTILAFIKNQFQASVLVIQMDRGSEYTNRTLHKFLEKNGITPCYTTTADSRAHGVAERLNRTLLDDCRTQLQCSGLPNHLWFSAIEFSTIVRNSLASPKSKKSARQHAGLAGLDISTLLPFGQPVIVNDHNPNSKIHPRGIPGYALHPSRNSYGYIIYLPSLKKTVDTTNYVILQGKESRLDQFNYDALTFDEDLNRLTASYQSFIASNEIQQSDDLNIESDHDFQSDIELHPEQPRNVLSKAVSPTDSTPPSTHTEDSKRVSKTNIRAPREVDPNISESNILPSKKRSSTPQISNIESTGSGGMHKLNVPLLAPMSQSNTHESSHASKSKDFRHSDSYSENETNHTNVPISSTGGTNNKTVPQISDQETEKRIIHRSPSIDASPPENNSSHNIVPIKTPTTVSEQNTEESIIADLPLPDLPPESPTEFPDPFKELPPINSHQTNSSLGGIGDSNAYTTINSKKRSLEDNETEIKVSRDTWNTKNMRSLEPPRSKKRIHLIAAVKAVKSIKPIRTTLRYDEAITYNKDIKEKEKYIEAYHKEVNQLLKMKTWDTDEYYDRKEIDPKRVINSMFIFNKKRDGTHKARFVARGDIQHPDTYDSGMQSNTVHHYALMTSLSLALDNNYYITQLDISSAYLYADIKEELYIRPPPHLGMNDKLIRLKKSLYGLKQSGANWYETIKSYLIKQCGMEEVRGWSCVFKNSQVTICLFVDDMILFSKDLNANKKIITTLKKQYDTKIINLGESDNEIQYDILGLEIKYQRGKYMKLGMENSLTEKIPKLNVPLNPKGRKLSAPGQPGLYIDQDELEIDEDEYKEKVHEMQKLIGLASYVGYKFRFDLLYYINTLAQHILFPSRQVLDMTYELIQFMWDTRDKQLIWHKNKPTEPDNKLVAISDASYGNQPYYKSQIGNIYLLNGKVIGGKSTKASLTCTSTTEAEIHAISESVPLLNNLSYLIQELNKKPIIKGLLTDSRSTISIIKSTNEEKFRNRFFGTKAMRLRDEVSGNNLYVYYIETKKNIADVMTKPLPIKTFKLLTNKWIH.

Polar residues-rich tracts occupy residues 1 to 23, 48 to 60, and 127 to 152; these read MESQ…SVTS, TKAN…TPAS, and QSQF…GNTF. 3 disordered regions span residues 1–93, 126–173, and 352–421; these read MESQ…MMTQ, PQSQ…RPPP, and GSRN…SKST. A compositionally biased stretch (low complexity) spans 153–165; the sequence is TDSSSADSDMTST. An RNA-binding region spans residues 299 to 401; it reads NNGIHINNKV…NSKSKTARAH (103 aa). Low complexity predominate over residues 402-418; that stretch reads NVSTSNNSPSTDNDSIS. At serine 416 the chain carries Phosphoserine. Aspartate 461 serves as the catalytic For protease activity; shared with dimeric partner. An integrase-type zinc finger-like region spans residues 583 to 640; it reads NVHTSESTRKYPYPFIHRMLAHANAQTIRYSLKNNTITYFNESDVDWSSAIDYQCPDC. Positions 660 to 835 constitute an Integrase catalytic domain; it reads NSYEPFQYLH…AGLDISTLLP (176 aa). Aspartate 671 and aspartate 736 together coordinate Mg(2+). 3 disordered regions span residues 956 to 1087, 1092 to 1111, and 1130 to 1171; these read SKAV…ETEK, RSPS…NIVP, and DLPL…DSNA. Residues 960–969 are compositionally biased toward low complexity; sequence SPTDSTPPST. The span at 1005-1015 shows a compositional bias: polar residues; the sequence is STPQISNIEST. The segment covering 1038 to 1053 has biased composition (basic and acidic residues); sequence ESSHASKSKDFRHSDS. 2 stretches are compositionally biased toward polar residues: residues 1054–1082 and 1101–1111; these read YSEN…QISD and PENNSSHNIVP. A Bipartite nuclear localization signal motif is present at residues 1178–1212; it reads KKRSLEDNETEIKVSRDTWNTKNMRSLEPPRSKKR. The Reverse transcriptase Ty1/copia-type domain maps to 1338-1476; sequence NNYYITQLDI…DILGLEIKYQ (139 aa). 6 residues coordinate Mg(2+): aspartate 1346, aspartate 1427, aspartate 1428, aspartate 1610, glutamate 1652, and aspartate 1685. An RNase H Ty1/copia-type domain is found at 1610 to 1752; sequence DASYGNQPYY…IKTFKLLTNK (143 aa).

The capsid protein forms a homotrimer, from which the VLPs are assembled. The protease is a homodimer, whose active site consists of two apposed aspartic acid residues. Post-translationally, initially, virus-like particles (VLPs) are composed of the structural unprocessed proteins Gag and Gag-Pol, and also contain the host initiator methionine tRNA (tRNA(i)-Met) which serves as a primer for minus-strand DNA synthesis, and a dimer of genomic Ty RNA. Processing of the polyproteins occurs within the particle and proceeds by an ordered pathway, called maturation. First, the protease (PR) is released by autocatalytic cleavage of the Gag-Pol polyprotein yielding capsid protein p45 and a Pol-p154 precursor protein. This cleavage is a prerequisite for subsequent processing of Pol-p154 at the remaining sites to release the mature structural and catalytic proteins. Maturation takes place prior to the RT reaction and is required to produce transposition-competent VLPs.

Its subcellular location is the cytoplasm. It localises to the nucleus. The enzyme catalyses DNA(n) + a 2'-deoxyribonucleoside 5'-triphosphate = DNA(n+1) + diphosphate. It catalyses the reaction Endonucleolytic cleavage to 5'-phosphomonoester.. In terms of biological role, capsid protein (CA) is the structural component of the virus-like particle (VLP), forming the shell that encapsulates the retrotransposons dimeric RNA genome. The particles are assembled from trimer-clustered units and there are holes in the capsid shells that allow for the diffusion of macromolecules. CA also has nucleocapsid-like chaperone activity, promoting primer tRNA(i)-Met annealing to the multipartite primer-binding site (PBS), dimerization of Ty1 RNA and initiation of reverse transcription. Functionally, the aspartyl protease (PR) mediates the proteolytic cleavages of the Gag and Gag-Pol polyproteins after assembly of the VLP. Reverse transcriptase/ribonuclease H (RT) is a multifunctional enzyme that catalyzes the conversion of the retro-elements RNA genome into dsDNA within the VLP. The enzyme displays a DNA polymerase activity that can copy either DNA or RNA templates, and a ribonuclease H (RNase H) activity that cleaves the RNA strand of RNA-DNA heteroduplexes during plus-strand synthesis and hydrolyzes RNA primers. The conversion leads to a linear dsDNA copy of the retrotransposon that includes long terminal repeats (LTRs) at both ends. Its function is as follows. Integrase (IN) targets the VLP to the nucleus, where a subparticle preintegration complex (PIC) containing at least integrase and the newly synthesized dsDNA copy of the retrotransposon must transit the nuclear membrane. Once in the nucleus, integrase performs the integration of the dsDNA into the host genome. The chain is Transposon Ty1-OL Gag-Pol polyprotein (TY1B-OL) from Saccharomyces cerevisiae (strain ATCC 204508 / S288c) (Baker's yeast).